Here is a 249-residue protein sequence, read N- to C-terminus: E3 ubiquitin-protein ligase RMA1 (249 aa).

The RING-type zinc-finger motif lies at 48–97 (CNICLDSVQEPVVTLCGHLFCWPCIHKWLDVQSFSTSDEYQRHRQCPVCK). Residues 231–248 (LGRIFFFFMCCVVLCLLL) traverse the membrane as a helical; Anchor for type IV membrane protein segment.

As to expression, ubiquitous. Highly expressed in roots.

Its subcellular location is the endoplasmic reticulum membrane. The enzyme catalyses S-ubiquitinyl-[E2 ubiquitin-conjugating enzyme]-L-cysteine + [acceptor protein]-L-lysine = [E2 ubiquitin-conjugating enzyme]-L-cysteine + N(6)-ubiquitinyl-[acceptor protein]-L-lysine.. Its pathway is protein modification; protein ubiquitination. E3 ubiquitin-protein ligase that promotes the ubiquitination and proteasomal degradation of aquaporin PIP2-1. Forms a ubiquitin ligase complex in cooperation with the E2 enzymes UCB8/UCB10. This Arabidopsis thaliana (Mouse-ear cress) protein is E3 ubiquitin-protein ligase RMA1 (RMA1).